Reading from the N-terminus, the 122-residue chain is Large ribosomal subunit protein bL19 (122 aa).

Belongs to the bacterial ribosomal protein bL19 family.

Functionally, this protein is located at the 30S-50S ribosomal subunit interface and may play a role in the structure and function of the aminoacyl-tRNA binding site. This Novosphingobium aromaticivorans (strain ATCC 700278 / DSM 12444 / CCUG 56034 / CIP 105152 / NBRC 16084 / F199) protein is Large ribosomal subunit protein bL19.